Reading from the N-terminus, the 201-residue chain is Large ribosomal subunit protein uL4 (201 aa).

Residues 45–67 (AQKTRAEVTGSGKKPWRQKGTGR) are disordered.

Belongs to the universal ribosomal protein uL4 family. Part of the 50S ribosomal subunit.

Its function is as follows. One of the primary rRNA binding proteins, this protein initially binds near the 5'-end of the 23S rRNA. It is important during the early stages of 50S assembly. It makes multiple contacts with different domains of the 23S rRNA in the assembled 50S subunit and ribosome. In terms of biological role, forms part of the polypeptide exit tunnel. This is Large ribosomal subunit protein uL4 from Yersinia enterocolitica serotype O:8 / biotype 1B (strain NCTC 13174 / 8081).